The sequence spans 65 residues: Sarcoplasmic/endoplasmic reticulum calcium ATPase regulator ARLN (65 aa).

Met-1 carries the N-acetylmethionine modification. Positions 1-38 (MEVGQAASGTDGVRERRGSSAARRRSQDEPVQSGMNGI) are disordered. Phosphoserine is present on residues Ser-19 and Ser-26. The chain crosses the membrane as a helical span at residues 44–64 (WLDLWLFILFDLALFIFVYLL).

In terms of assembly, homooligomer. Can also form heterooligomers with other sarcoplasmic/endoplasmic reticulum calcium ATPase (SERCA) regulators ERLN, PLN, SLN and STRIT1/DWORF. Monomer. Interacts as a monomer with ATP2A2/SERCA2; the interaction results in inhibition of ATP2A2 Ca(2+) affinity.

The protein resides in the endoplasmic reticulum membrane. Its function is as follows. Inhibits the activity of the calcium ATPases ATP2A2/SERCA2 and ATP2A3/SERCA3 by decreasing their apparent affinity for Ca(2+). The protein is Sarcoplasmic/endoplasmic reticulum calcium ATPase regulator ARLN (Arln) of Rattus norvegicus (Rat).